Reading from the N-terminus, the 795-residue chain is Outer membrane protein assembly factor BamA (795 aa).

Positions 1 to 19 are cleaved as a signal peptide; sequence MKKLLIASLLFGTTTTVFA. 5 consecutive POTRA domains span residues 22-89, 90-170, 173-259, 262-341, and 344-418; these read FVAK…VVAK, SIIS…INED, AKLA…VNEG, YDLR…VDAG, and LTVR…VKER.

This sequence belongs to the BamA family. Part of the Bam complex.

It is found in the cell outer membrane. Functionally, part of the outer membrane protein assembly complex, which is involved in assembly and insertion of beta-barrel proteins into the outer membrane. This is Outer membrane protein assembly factor BamA from Haemophilus influenzae (strain ATCC 51907 / DSM 11121 / KW20 / Rd).